Consider the following 239-residue polypeptide: Lactate utilization protein A 1 (239 aa).

It belongs to the LutA/YkgE family.

In terms of biological role, is involved in L-lactate degradation and allows cells to grow with lactate as the sole carbon source. This Bacillus cereus (strain AH820) protein is Lactate utilization protein A 1.